We begin with the raw amino-acid sequence, 774 residues long: Dapper homolog 2 (774 aa).

The stretch at 67 to 93 (PEQQLEAALAALQEQLSRLRQQDIGLK) forms a coiled coil. Disordered stretches follow at residues 188–225 (RPQA…LDRA), 295–319 (TPQR…TIQT), 345–500 (TPAK…EKIK), and 624–710 (CPES…GAQS). The span at 438-452 (VQASPSSKAQQTPSA) shows a compositional bias: polar residues. A compositionally biased stretch (low complexity) spans 637–648 (RRAGGPLARGRP). Basic and acidic residues-rich tracts occupy residues 655-672 (AYTR…ECDP) and 686-700 (SSDH…RESS). Residues 771–774 (MTMV) carry the PDZ-binding motif.

Belongs to the dapper family. In terms of assembly, can form homodimers and heterodimers with DACT1 or DACT3. Interacts with CSNK1D, PKA catalytic subunit, PKC-type kinase, CSNK2B, DVL1, DVL2, DVL3, VANGL1, VANGL2, TGFBR1, CTNNB1, CTNND2, CTNND1, LEF1, TCF7, TCF7L1 and HDAC1.

Its function is as follows. Involved in regulation of intracellular signaling pathways during development. Negatively regulates the Nodal signaling pathway, possibly by promoting the lysosomal degradation of Nodal receptors, such as TGFBR1. May be involved in control of the morphogenetic behavior of kidney ureteric bud cells by keeping cells epithelial and restraining their mesenchymal character. May play an inhibitory role in the re-epithelialization of skin wounds by attenuating TGF-beta signaling. This is Dapper homolog 2 (DACT2) from Homo sapiens (Human).